The primary structure comprises 115 residues: Protein E6A (115 aa).

Residues 1 to 25 (MTDKFYFYGLFWGILLFVFLQHMQG) form the signal peptide.

The protein is Protein E6A (12) of Equine herpesvirus 2 (strain 86/87) (EHV-2).